The sequence spans 446 residues: Phosphoglucosamine mutase (446 aa).

S103 functions as the Phosphoserine intermediate in the catalytic mechanism. Mg(2+) is bound by residues S103, D242, D244, and D246. A Phosphoserine modification is found at S103.

This sequence belongs to the phosphohexose mutase family. Mg(2+) serves as cofactor. Post-translationally, activated by phosphorylation.

The catalysed reaction is alpha-D-glucosamine 1-phosphate = D-glucosamine 6-phosphate. In terms of biological role, catalyzes the conversion of glucosamine-6-phosphate to glucosamine-1-phosphate. This Vibrio cholerae serotype O1 (strain ATCC 39315 / El Tor Inaba N16961) protein is Phosphoglucosamine mutase.